The primary structure comprises 362 residues: MENQVLTPHVYWAQRHHELYLRVELSDVQNPAISITENVLHFKAQGHGAKGDNVYEFHLEFLDLVKPEPVYKLTQRQVNITVQKKESQWWERLTKQEKRPLFLAPDFDRWLDESDAEMELRAKEEEQLNKLRLESQGSPETLTSLKKGYLFMYNLVQFLGFSWIFVNMTVRFFILGKESFYDTFHTVADMMYFCQMLAAVESINAAIGVTKSPVVPSLFQLLGRNFILFIIFGTMEEMQNKAVVFFVFYIWSTVEIFRYPFYMLSCIDMDWKVLTWLRYTVWIPLYPMGCLAEAVSVIQSIPVFNETGRFSFTLPYPVKIKVRFSFFLQIYLILLFLGLYVNFRYLYKQRRRRFGQKKKKIH.

Met-1 is subject to N-acetylmethionine. The Cytoplasmic portion of the chain corresponds to Met-1–Tyr-149. Positions Val-5–Thr-94 constitute a CS domain. At Thr-7 the chain carries Phosphothreonine. A coiled-coil region spans residues Leu-111–Gln-136. Ser-114 and Ser-135 each carry phosphoserine. A helical membrane pass occupies residues Leu-150–Val-170. Topologically, residues Arg-171–Asp-189 are lumenal. Residues Met-190–Thr-210 form a helical membrane-spanning segment. The Cytoplasmic portion of the chain corresponds to Lys-211–Ser-212. The chain crosses the membrane as a helical span at residues Pro-213–Gly-233. Residues Thr-234–Ala-242 are Lumenal-facing. The chain crosses the membrane as a helical span at residues Val-243–Met-263. The Cytoplasmic portion of the chain corresponds to Leu-264 to Thr-280. Residues Val-281–Ile-301 traverse the membrane as a helical segment. Active-site residues include Tyr-286 and Glu-293. Over Pro-302–Ser-325 the chain is Lumenal. A helical membrane pass occupies residues Phe-326–Leu-346. Residues Tyr-347–His-362 are Cytoplasmic-facing.

This sequence belongs to the very long-chain fatty acids dehydratase HACD family. As to quaternary structure, may interact with enzymes of the ELO family (including ELOVL1); with those enzymes that mediate condensation, the first of the four steps of the reaction cycle responsible for fatty acids elongation, may be part of a larger fatty acids elongase complex. Interacts with RAC1. Associates with internalized insulin receptor/INSR complexes on Golgi/endosomal membranes; HACD3/PTPLAD1 together with ATIC and PRKAA2/AMPK2 is proposed to be part of a signaling network regulating INSR autophosphorylation and endocytosis.

Its subcellular location is the endoplasmic reticulum membrane. It catalyses the reaction a very-long-chain (3R)-3-hydroxyacyl-CoA = a very-long-chain (2E)-enoyl-CoA + H2O. The enzyme catalyses (3R)-hydroxyhexadecanoyl-CoA = (2E)-hexadecenoyl-CoA + H2O. Its pathway is lipid metabolism; fatty acid biosynthesis. Its function is as follows. Catalyzes the third of the four reactions of the long-chain fatty acids elongation cycle. This endoplasmic reticulum-bound enzymatic process, allows the addition of two carbons to the chain of long- and very long-chain fatty acids/VLCFAs per cycle. This enzyme catalyzes the dehydration of the 3-hydroxyacyl-CoA intermediate into trans-2,3-enoyl-CoA, within each cycle of fatty acid elongation. Thereby, it participates in the production of VLCFAs of different chain lengths that are involved in multiple biological processes as precursors of membrane lipids and lipid mediators. Involved in Rac1-signaling pathways leading to the modulation of gene expression. Promotes insulin receptor/INSR autophosphorylation and is involved in INSR internalization. This Bos taurus (Bovine) protein is Very-long-chain (3R)-3-hydroxyacyl-CoA dehydratase 3.